We begin with the raw amino-acid sequence, 701 residues long: DNA ligase (701 aa).

NAD(+) contacts are provided by residues 43–47 (DAAYD), 92–93 (SL), and Glu126. Lys128 (N6-AMP-lysine intermediate) is an active-site residue. Positions 149, 186, 302, and 326 each coordinate NAD(+). 4 residues coordinate Zn(2+): Cys420, Cys423, Cys444, and Cys450. Positions 623–701 (ANDSPVAGKT…EDEWFDLIGA (79 aa)) constitute a BRCT domain.

Belongs to the NAD-dependent DNA ligase family. LigA subfamily. Mg(2+) serves as cofactor. Requires Mn(2+) as cofactor.

It carries out the reaction NAD(+) + (deoxyribonucleotide)n-3'-hydroxyl + 5'-phospho-(deoxyribonucleotide)m = (deoxyribonucleotide)n+m + AMP + beta-nicotinamide D-nucleotide.. DNA ligase that catalyzes the formation of phosphodiester linkages between 5'-phosphoryl and 3'-hydroxyl groups in double-stranded DNA using NAD as a coenzyme and as the energy source for the reaction. It is essential for DNA replication and repair of damaged DNA. This chain is DNA ligase, found in Maricaulis maris (strain MCS10) (Caulobacter maris).